The sequence spans 351 residues: Holliday junction branch migration complex subunit RuvB (351 aa).

The large ATPase domain (RuvB-L) stretch occupies residues 1–186 (MDEKIETRLI…FGIVQRLEFY (186 aa)). Residues isoleucine 25, arginine 26, glycine 67, lysine 70, threonine 71, threonine 72, 133–135 (EDF), arginine 176, tyrosine 186, and arginine 223 each bind ATP. Threonine 71 is a Mg(2+) binding site. A small ATPAse domain (RuvB-S) region spans residues 187-257 (RIPDLIHIVK…IAKEALDLLN (71 aa)). Residues 260-351 (IRGLDVMDRK…ENFDLLGKVE (92 aa)) are head domain (RuvB-H). Positions 296, 315, and 320 each coordinate DNA.

This sequence belongs to the RuvB family. In terms of assembly, homohexamer. Forms an RuvA(8)-RuvB(12)-Holliday junction (HJ) complex. HJ DNA is sandwiched between 2 RuvA tetramers; dsDNA enters through RuvA and exits via RuvB. An RuvB hexamer assembles on each DNA strand where it exits the tetramer. Each RuvB hexamer is contacted by two RuvA subunits (via domain III) on 2 adjacent RuvB subunits; this complex drives branch migration. In the full resolvosome a probable DNA-RuvA(4)-RuvB(12)-RuvC(2) complex forms which resolves the HJ.

The protein resides in the cytoplasm. The catalysed reaction is ATP + H2O = ADP + phosphate + H(+). In terms of biological role, the RuvA-RuvB-RuvC complex processes Holliday junction (HJ) DNA during genetic recombination and DNA repair, while the RuvA-RuvB complex plays an important role in the rescue of blocked DNA replication forks via replication fork reversal (RFR). RuvA specifically binds to HJ cruciform DNA, conferring on it an open structure. The RuvB hexamer acts as an ATP-dependent pump, pulling dsDNA into and through the RuvAB complex. RuvB forms 2 homohexamers on either side of HJ DNA bound by 1 or 2 RuvA tetramers; 4 subunits per hexamer contact DNA at a time. Coordinated motions by a converter formed by DNA-disengaged RuvB subunits stimulates ATP hydrolysis and nucleotide exchange. Immobilization of the converter enables RuvB to convert the ATP-contained energy into a lever motion, pulling 2 nucleotides of DNA out of the RuvA tetramer per ATP hydrolyzed, thus driving DNA branch migration. The RuvB motors rotate together with the DNA substrate, which together with the progressing nucleotide cycle form the mechanistic basis for DNA recombination by continuous HJ branch migration. Branch migration allows RuvC to scan DNA until it finds its consensus sequence, where it cleaves and resolves cruciform DNA. The sequence is that of Holliday junction branch migration complex subunit RuvB from Coxiella burnetii (strain RSA 331 / Henzerling II).